A 508-amino-acid polypeptide reads, in one-letter code: Tryptamine 4-monooxygenase (508 aa).

The N-terminal stretch at 1–19 is a signal peptide; it reads MIAVLFSFVIAGCIYYIVS. C439 provides a ligand contact to heme.

The protein belongs to the cytochrome P450 family. Requires heme as cofactor.

It carries out the reaction tryptamine + AH2 + O2 = 4-hydroxytryptamine + A + H2O. Its pathway is secondary metabolite biosynthesis. In terms of biological role, cytochrome P450 monooxygenase; part of the gene cluster that mediates the biosynthesis of psilocybin, a psychotropic tryptamine-derived natural product. The first step in the pathway is the decarboxylation of L-tryptophan to tryptamine by the decarboxylase psiD. 4-hydroxy-L-tryptophan is accepted as substrate by psiD as well. The cytochrome P450 monooxygenase psiH then converts tryptamine to 4-hydroxytryptamine. The kinase psiK catalyzes the 4-O-phosphorylation step by converting 4-hydroxytryptamine into norbaeocystin. The methyltransferase psiM then catalyzes iterative methyl transfer to the amino group of norbaeocystin to yield psilocybin via a monomethylated intermediate, baeocystin. The sequence is that of Tryptamine 4-monooxygenase from Psilocybe cubensis (Psychedelic mushroom).